A 400-amino-acid chain; its full sequence is Acetate kinase (400 aa).

Asparagine 7 serves as a coordination point for Mg(2+). ATP is bound at residue lysine 14. Arginine 85 contacts substrate. Aspartate 142 (proton donor/acceptor) is an active-site residue. Residues 202–206 (HLGNG), 278–280 (DMR), and 326–330 (GIGEN) contribute to the ATP site. Residue glutamate 380 participates in Mg(2+) binding.

Belongs to the acetokinase family. As to quaternary structure, homodimer. The cofactor is Mg(2+). Requires Mn(2+) as cofactor.

The protein localises to the cytoplasm. The enzyme catalyses acetate + ATP = acetyl phosphate + ADP. It participates in metabolic intermediate biosynthesis; acetyl-CoA biosynthesis; acetyl-CoA from acetate: step 1/2. Catalyzes the formation of acetyl phosphate from acetate and ATP. Can also catalyze the reverse reaction. The protein is Acetate kinase of Deinococcus deserti (strain DSM 17065 / CIP 109153 / LMG 22923 / VCD115).